Reading from the N-terminus, the 109-residue chain is Large ribosomal subunit protein eL30 (109 aa).

This sequence belongs to the eukaryotic ribosomal protein eL30 family.

In Methanopyrus kandleri (strain AV19 / DSM 6324 / JCM 9639 / NBRC 100938), this protein is Large ribosomal subunit protein eL30.